The following is a 229-amino-acid chain: MATWAQFGLQDASSPLMEELTYFHDYALIVLTLITILVFYGLVSLLLSSSTNRFFLEGQELETIWTVVPAFILIFIALPSLQLLYLMDEVNNPFLTIKAIGHQWYWSYEYTDYNDLEFDSYMVPTSDVSLGNPRLLEVDNRLILPMQNPIRVLVSSADVLHSWAVPSLGVKMDAVPGRLNQTTFFAARAGLFYGQCSEICGANHSFMPILIESVPFSNFENWVAQYIEE.

Residues 1–26 (MATWAQFGLQDASSPLMEELTYFHDY) are Mitochondrial intermembrane-facing. A helical membrane pass occupies residues 27-48 (ALIVLTLITILVFYGLVSLLLS). Residues 49–62 (SSTNRFFLEGQELE) lie on the Mitochondrial matrix side of the membrane. The chain crosses the membrane as a helical span at residues 63 to 82 (TIWTVVPAFILIFIALPSLQ). At 83 to 229 (LLYLMDEVNN…ENWVAQYIEE (147 aa)) the chain is on the mitochondrial intermembrane side. 6 residues coordinate Cu cation: His-161, Cys-196, Glu-198, Cys-200, His-204, and Met-207. Residue Glu-198 participates in Mg(2+) binding.

The protein belongs to the cytochrome c oxidase subunit 2 family. Component of the cytochrome c oxidase (complex IV, CIV), a multisubunit enzyme composed of a catalytic core of 3 subunits and several supernumerary subunits. The complex exists as a monomer or a dimer and forms supercomplexes (SCs) in the inner mitochondrial membrane with ubiquinol-cytochrome c oxidoreductase (cytochrome b-c1 complex, complex III, CIII). It depends on Cu cation as a cofactor.

The protein resides in the mitochondrion inner membrane. It carries out the reaction 4 Fe(II)-[cytochrome c] + O2 + 8 H(+)(in) = 4 Fe(III)-[cytochrome c] + 2 H2O + 4 H(+)(out). Functionally, component of the cytochrome c oxidase, the last enzyme in the mitochondrial electron transport chain which drives oxidative phosphorylation. The respiratory chain contains 3 multisubunit complexes succinate dehydrogenase (complex II, CII), ubiquinol-cytochrome c oxidoreductase (cytochrome b-c1 complex, complex III, CIII) and cytochrome c oxidase (complex IV, CIV), that cooperate to transfer electrons derived from NADH and succinate to molecular oxygen, creating an electrochemical gradient over the inner membrane that drives transmembrane transport and the ATP synthase. Cytochrome c oxidase is the component of the respiratory chain that catalyzes the reduction of oxygen to water. Electrons originating from reduced cytochrome c in the intermembrane space (IMS) are transferred via the dinuclear copper A center (CU(A)) of subunit 2 and heme A of subunit 1 to the active site in subunit 1, a binuclear center (BNC) formed by heme A3 and copper B (CU(B)). The BNC reduces molecular oxygen to 2 water molecules using 4 electrons from cytochrome c in the IMS and 4 protons from the mitochondrial matrix. The chain is Cytochrome c oxidase subunit 2 (COII) from Paracentrotus lividus (Common sea urchin).